The primary structure comprises 121 residues: Holo-[acyl-carrier-protein] synthase (121 aa).

Mg(2+)-binding residues include Asp-8 and Glu-58.

It belongs to the P-Pant transferase superfamily. AcpS family. Mg(2+) serves as cofactor.

The protein localises to the cytoplasm. It carries out the reaction apo-[ACP] + CoA = holo-[ACP] + adenosine 3',5'-bisphosphate + H(+). In terms of biological role, transfers the 4'-phosphopantetheine moiety from coenzyme A to a Ser of acyl-carrier-protein. This chain is Holo-[acyl-carrier-protein] synthase, found in Bacillus pumilus (strain SAFR-032).